Consider the following 418-residue polypeptide: Probable serine hydroxymethyltransferase (418 aa).

(6S)-5,6,7,8-tetrahydrofolate is bound by residues Leu118 and 122–124 (GHL). Lys226 carries the post-translational modification N6-(pyridoxal phosphate)lysine. 351–353 (SPF) serves as a coordination point for (6S)-5,6,7,8-tetrahydrofolate.

The protein belongs to the SHMT family. Homodimer. Requires pyridoxal 5'-phosphate as cofactor.

The protein localises to the cytoplasm. The catalysed reaction is (6R)-5,10-methylene-5,6,7,8-tetrahydrofolate + glycine + H2O = (6S)-5,6,7,8-tetrahydrofolate + L-serine. The protein operates within one-carbon metabolism; tetrahydrofolate interconversion. Its function is as follows. Catalyzes the reversible interconversion of serine and glycine with tetrahydrofolate (THF) serving as the one-carbon carrier. This reaction serves as the major source of one-carbon groups required for the biosynthesis of purines, thymidylate, methionine, and other important biomolecules. This chain is Probable serine hydroxymethyltransferase, found in Mesomycoplasma hyopneumoniae (strain 232) (Mycoplasma hyopneumoniae).